Here is a 206-residue protein sequence, read N- to C-terminus: Thymidylate kinase (206 aa).

14–21 contacts ATP; the sequence is GGEGIGKS.

It belongs to the thymidylate kinase family.

It catalyses the reaction dTMP + ATP = dTDP + ADP. Phosphorylation of dTMP to form dTDP in both de novo and salvage pathways of dTTP synthesis. The sequence is that of Thymidylate kinase from Rickettsia bellii (strain RML369-C).